The primary structure comprises 419 residues: Effector protein BipC (419 aa).

2 disordered regions span residues 62–91 and 338–402; these read VAGSGAQRVELARPKPDAQTRATDRRTVSG and LQSG…AKSQ. 2 stretches are compositionally biased toward basic and acidic residues: residues 71-91 and 380-392; these read ELARPKPDAQTRATDRRTVSG and TRDEAAHRSREAA.

The protein belongs to the SctB/SipC family.

It is found in the secreted. The polypeptide is Effector protein BipC (bipC) (Burkholderia pseudomallei (strain 1106a)).